An 822-amino-acid polypeptide reads, in one-letter code: Coiled-coil domain-containing protein 175 (822 aa).

3 coiled-coil regions span residues 129–164 (IIEI…EVLG), 223–397 (IEKQ…KQMM), and 510–537 (HLIE…IEEL).

The polypeptide is Coiled-coil domain-containing protein 175 (Ccdc175) (Mus musculus (Mouse)).